The chain runs to 254 residues: Isoprenyl transferase (254 aa).

The active site involves D12. D12 provides a ligand contact to Mg(2+). Substrate contacts are provided by residues 13-16 (GNGR), W17, R25, H29, and 57-59 (SSE). N60 acts as the Proton acceptor in catalysis. Substrate is bound by residues W61, R63, R180, and 186–188 (RLS). E199 serves as a coordination point for Mg(2+).

This sequence belongs to the UPP synthase family. As to quaternary structure, homodimer. The cofactor is Mg(2+).

Functionally, catalyzes the condensation of isopentenyl diphosphate (IPP) with allylic pyrophosphates generating different type of terpenoids. The protein is Isoprenyl transferase of Brucella suis biovar 1 (strain 1330).